Reading from the N-terminus, the 295-residue chain is MEVLDVLNLGEIAQYFSKMAMFPVFDVAYYIVSILYLKYEPGAVEVSRRSPVASWLCAMLYCFGSYILADIMLGVCPIDYFHNNSHILLASAVWYLIFFCPLNLFYKCVAFMPVKLVLVALKEVVRTRKIAAGVHHAHHAYHHGWLIMVITGYVKGSGVALMSNFEQLLRGVWKPETNEVLNMSFPTKASLYGAILFTLQEAHVLPVSKSTLICLFTLFMVSSKVFMTARHSHGSPFALIESWVCHVLFGSPLGTEDAHDHHHAAPAAAPAPLSPAKNKEELSEGTRKRKSKKAE.

At 1-18 the chain is on the lumenal side; the sequence is MEVLDVLNLGEIAQYFSK. Residues 19-37 form a helical membrane-spanning segment; sequence MAMFPVFDVAYYIVSILYL. Over 38 to 51 the chain is Cytoplasmic; it reads KYEPGAVEVSRRSP. A helical membrane pass occupies residues 52-75; it reads VASWLCAMLYCFGSYILADIMLGV. Gly-74 is a Ca(2+) binding site. At 76–86 the chain is on the lumenal side; the sequence is CPIDYFHNNSH. Residues 87 to 106 form a helical membrane-spanning segment; that stretch reads ILLASAVWYLIFFCPLNLFY. Topologically, residues 107–144 are cytoplasmic; that stretch reads KCVAFMPVKLVLVALKEVVRTRKIAAGVHHAHHAYHHG. 2 residues coordinate a 1,2-diacyl-sn-glycero-3-phospho-(1D-myo-inositol-4,5-bisphosphate): Lys-122 and Arg-126. A helical transmembrane segment spans residues 145–162; it reads WLIMVITGYVKGSGVALM. Over 163–182 the chain is Lumenal; it reads SNFEQLLRGVWKPETNEVLN. A helical transmembrane segment spans residues 183–199; it reads MSFPTKASLYGAILFTL. At 200 to 210 the chain is on the cytoplasmic side; that stretch reads QEAHVLPVSKS. The chain crosses the membrane as a helical span at residues 211–227; that stretch reads TLICLFTLFMVSSKVFM. Residues 228–236 lie on the Lumenal side of the membrane; that stretch reads TARHSHGSP. A helical transmembrane segment spans residues 237–255; it reads FALIESWVCHVLFGSPLGT. Residues 256–295 are Cytoplasmic-facing; that stretch reads EDAHDHHHAAPAAAPAPLSPAKNKEELSEGTRKRKSKKAE. Residues 259-295 are disordered; that stretch reads HDHHHAAPAAAPAPLSPAKNKEELSEGTRKRKSKKAE. A compositionally biased stretch (low complexity) spans 265-276; sequence APAAAPAPLSPA. Residues 277–286 are compositionally biased toward basic and acidic residues; that stretch reads KNKEELSEGT.

It belongs to the TMEM38 family. Homotrimer; conformation seems to be controled by binding to diacylglycerol (DAG).

The protein localises to the sarcoplasmic reticulum membrane. The protein resides in the nucleus membrane. The enzyme catalyses K(+)(in) = K(+)(out). Its activity is regulated as follows. Channel activity is activated by a change of voltage within the sarcoplasmic reticulum lumen and blocked by luminal high Ca(2+) levels. Functionally, intracellular monovalent cation channel required for maintenance of rapid intracellular calcium release. Acts as a potassium counter-ion channel that functions in synchronization with calcium release from intracellular stores. Opened by a change of voltage within the sarcoplasmic reticulum lumen. The polypeptide is Trimeric intracellular cation channel type A (tmem38a) (Danio rerio (Zebrafish)).